The chain runs to 232 residues: Vesicle transport through interaction with t-SNAREs homolog 1B (232 aa).

The residue at position 2 (Ala2) is an N-acetylalanine. 2 interaction with CLINT1 regions span residues 2–23 (ASSAASSEHFEKLHEIFRGLHE) and 69–73 (APLSF). Residues 2 to 208 (ASSAASSEHF…SRKVTTNKLL (207 aa)) lie on the Cytoplasmic side of the membrane. Residues 35-98 (TAGTEEKKKL…AKLHREVRST (64 aa)) adopt a coiled-coil conformation. The residue at position 103 (Thr103) is a Phosphothreonine. The residue at position 107 (Arg107) is an Omega-N-methylarginine. Residue Ser138 is modified to Phosphoserine. A coiled-coil region spans residues 161–198 (SEIIEELGEQRDQLERTKSRLVNTSENLSKSRKILRSM). Residues 209–229 (LSIIILLELAILGGLVYYKFF) form a helical; Anchor for type IV membrane protein membrane-spanning segment. At 230–232 (RSH) the chain is on the vesicular side.

Belongs to the VTI1 family. In terms of assembly, forms a SNARE complex with STX7, STX8 and VAMP8 which functions in the homotypic fusion of late endosomes. Component of the SNARE complex composed of STX7, STX8, VAMP7 and VIT1B that is required for heterotypic fusion of late endosomes with lysosomes. May interact with STX17. Interacts with CLINT1. In terms of tissue distribution, expressed in all tissues examined.

It is found in the early endosome membrane. Its subcellular location is the late endosome membrane. It localises to the lysosome membrane. The protein resides in the cytoplasmic granule. The protein localises to the recycling endosome membrane. Functionally, V-SNARE that mediates vesicle transport pathways through interactions with t-SNAREs on the target membrane. These interactions are proposed to mediate aspects of the specificity of vesicle trafficking and to promote fusion of the lipid bilayers. May be concerned with increased secretion of cytokines associated with cellular senescence. The protein is Vesicle transport through interaction with t-SNAREs homolog 1B (VTI1B) of Homo sapiens (Human).